Here is a 474-residue protein sequence, read N- to C-terminus: Cysteine--tRNA ligase (474 aa).

C27 contributes to the Zn(2+) binding site. The 'HIGH' region signature appears at P29–N39. Zn(2+)-binding residues include C212, H237, and E241. Residues K271–S275 carry the 'KMSKS' region motif. K274 contacts ATP.

This sequence belongs to the class-I aminoacyl-tRNA synthetase family. Monomer. Zn(2+) is required as a cofactor.

The protein localises to the cytoplasm. The enzyme catalyses tRNA(Cys) + L-cysteine + ATP = L-cysteinyl-tRNA(Cys) + AMP + diphosphate. This is Cysteine--tRNA ligase from Lactobacillus delbrueckii subsp. bulgaricus (strain ATCC BAA-365 / Lb-18).